The following is a 208-amino-acid chain: Putative dioxygenase RBE_0329 (208 aa).

The protein belongs to the intradiol ring-cleavage dioxygenase family.

This Rickettsia bellii (strain RML369-C) protein is Putative dioxygenase RBE_0329.